The following is a 292-amino-acid chain: ATP synthase gamma chain (292 aa).

It belongs to the ATPase gamma chain family. In terms of assembly, F-type ATPases have 2 components, CF(1) - the catalytic core - and CF(0) - the membrane proton channel. CF(1) has five subunits: alpha(3), beta(3), gamma(1), delta(1), epsilon(1). CF(0) has three main subunits: a, b and c.

Its subcellular location is the cell inner membrane. Its function is as follows. Produces ATP from ADP in the presence of a proton gradient across the membrane. The gamma chain is believed to be important in regulating ATPase activity and the flow of protons through the CF(0) complex. The sequence is that of ATP synthase gamma chain from Nautilia profundicola (strain ATCC BAA-1463 / DSM 18972 / AmH).